A 292-amino-acid polypeptide reads, in one-letter code: NAD kinase (292 aa).

Asp73 serves as the catalytic Proton acceptor. NAD(+)-binding positions include 73-74, 147-148, His158, Arg175, Asp177, 188-193, and Gln247; these read DG, NE, and TAYSLS.

This sequence belongs to the NAD kinase family. Requires a divalent metal cation as cofactor.

It is found in the cytoplasm. The enzyme catalyses NAD(+) + ATP = ADP + NADP(+) + H(+). In terms of biological role, involved in the regulation of the intracellular balance of NAD and NADP, and is a key enzyme in the biosynthesis of NADP. Catalyzes specifically the phosphorylation on 2'-hydroxyl of the adenosine moiety of NAD to yield NADP. In Pectobacterium atrosepticum (strain SCRI 1043 / ATCC BAA-672) (Erwinia carotovora subsp. atroseptica), this protein is NAD kinase.